Consider the following 352-residue polypeptide: Protein MGF 360-9L (352 aa).

Belongs to the asfivirus MGF 360 family. In terms of assembly, interacts with host STAT1; this interaction mediates STAT1 degradation through apoptosis. Interacts with host STAT2; this interaction mediates STAT2 degradation through the proteasome.

The protein localises to the host cytoplasm. Its function is as follows. Plays a role in virus cell tropism, and may be required for efficient virus replication in macrophages. In addition, inhibits IFN-beta-induced IFN-stimulated genes (ISGs) transcription. Mechanistically, degrades host STAT1 and STAT2 through apoptosis and ubiquitin-proteasome pathways respectively. This chain is Protein MGF 360-9L, found in Ornithodoros (relapsing fever ticks).